A 344-amino-acid polypeptide reads, in one-letter code: Anthranilate phosphoribosyltransferase (344 aa).

Residues glycine 85, 88-89 (GD), threonine 93, 95-98 (NIST), 113-121 (KHGNRSVSS), and serine 125 contribute to the 5-phospho-alpha-D-ribose 1-diphosphate site. Glycine 85 lines the anthranilate pocket. A Mg(2+)-binding site is contributed by serine 97. Residue asparagine 116 participates in anthranilate binding. An anthranilate-binding site is contributed by arginine 171. Mg(2+)-binding residues include aspartate 229 and glutamate 230.

It belongs to the anthranilate phosphoribosyltransferase family. As to quaternary structure, homodimer. Mg(2+) serves as cofactor.

It carries out the reaction N-(5-phospho-beta-D-ribosyl)anthranilate + diphosphate = 5-phospho-alpha-D-ribose 1-diphosphate + anthranilate. Its pathway is amino-acid biosynthesis; L-tryptophan biosynthesis; L-tryptophan from chorismate: step 2/5. Its function is as follows. Catalyzes the transfer of the phosphoribosyl group of 5-phosphorylribose-1-pyrophosphate (PRPP) to anthranilate to yield N-(5'-phosphoribosyl)-anthranilate (PRA). This Shewanella amazonensis (strain ATCC BAA-1098 / SB2B) protein is Anthranilate phosphoribosyltransferase.